Reading from the N-terminus, the 211-residue chain is Uracil phosphoribosyltransferase (211 aa).

5-phospho-alpha-D-ribose 1-diphosphate-binding positions include R77, R102, and 129-137 (DPMLATGGS). Uracil contacts are provided by residues I192 and 197–199 (GDA). Position 198 (D198) interacts with 5-phospho-alpha-D-ribose 1-diphosphate.

Belongs to the UPRTase family. Mg(2+) is required as a cofactor.

It carries out the reaction UMP + diphosphate = 5-phospho-alpha-D-ribose 1-diphosphate + uracil. The protein operates within pyrimidine metabolism; UMP biosynthesis via salvage pathway; UMP from uracil: step 1/1. Its activity is regulated as follows. Allosterically activated by GTP. In terms of biological role, catalyzes the conversion of uracil and 5-phospho-alpha-D-ribose 1-diphosphate (PRPP) to UMP and diphosphate. In Corynebacterium aurimucosum (strain ATCC 700975 / DSM 44827 / CIP 107346 / CN-1) (Corynebacterium nigricans), this protein is Uracil phosphoribosyltransferase.